A 591-amino-acid chain; its full sequence is MESTLKEMRDGASVLDMDPKSTVGGGVEDVYGEDRATEDQLVTPWTISVASGYTLLRDPHHNKGLAFTEKERDAHYLRGLLPPTTISQQLQEKKLMNTIRQYQLPLQKYTAMMELEERNERLFYKLLIDNVEELLPVVYTPTVGEACQKYGSIFKRPQGLYISLKEKGKVLDVLKNWPQKSIQVIVVTDGERILGLGDLGCQGIGIPVGKLSLYTALGGVRPSACLPVTIDVGTNNEQLLKDEFYIGLRQRRATGQEYSELLHEFMTAVKQNYGEKVLIQFEDFANHNAFDLLAKYGTTHLVFNDDIQGTAAVVLAGLISALKLLGGSLADHTFLFLGAGEAGTGIAELIALEMSRRSKTPLEETRKKIWLTDSKGLIVSSRKESLQHFKKPWAHEHEPVKGLLEVVKAIKPIVLIGTSGVGKTFTKEVIEAMASFNEKPLILALSNPTSQSECTAQEAYTWTKGKAIFASGSPFDPVEYEGKVFVPGQSNNAYIFPGLGLGLVISGAIRVHDDMLLAAAEALAGQIKEEYLAKGLIYPPLSNIRKISVQIAANVAAKAYELGLATRLPRPENLVKHAESCMYSPAYRYYR.

Residues 1-10 (MESTLKEMRD) are compositionally biased toward basic and acidic residues. A disordered region spans residues 1–26 (MESTLKEMRDGASVLDMDPKSTVGGG). The active-site Proton donor is Y139. NAD(+) is bound at residue R192. Residue K210 is the Proton acceptor of the active site. 3 residues coordinate a divalent metal cation: E282, D283, and D306. D306 contacts NAD(+). 335 to 351 (LFLGAGEAGTGIAELIA) is an NADP(+) binding site. N447 contributes to the NAD(+) binding site.

The protein belongs to the malic enzymes family. In terms of assembly, homotetramer. Requires Mg(2+) as cofactor. The cofactor is Mn(2+). As to expression, mRNA found twofold higher in leaves and stems than in roots.

Its subcellular location is the cytoplasm. The catalysed reaction is (S)-malate + NADP(+) = pyruvate + CO2 + NADPH. The enzyme catalyses oxaloacetate + H(+) = pyruvate + CO2. This Populus trichocarpa (Western balsam poplar) protein is NADP-dependent malic enzyme.